A 175-amino-acid chain; its full sequence is MTTTEFPSAIAKARFVRVSPRKARRVIDLVRGRSVADALDILRWAPQAASEPVARVIASAAANAQNNNGLDPETLVVATVYAGEGPTAKRIRPRAQGRAFRIRRRTSHITVVVESRPVKDQRSAASTKARRAEASKTAGRAPAKKAGASSGATKMPPKKASVKTSEASETKGGSD.

The tract at residues 113 to 175 is disordered; that stretch reads VESRPVKDQR…EASETKGGSD (63 aa). Positions 136–154 are enriched in low complexity; the sequence is KTAGRAPAKKAGASSGATK. Residues 166–175 show a composition bias toward basic and acidic residues; sequence EASETKGGSD.

It belongs to the universal ribosomal protein uL22 family. Part of the 50S ribosomal subunit.

In terms of biological role, this protein binds specifically to 23S rRNA; its binding is stimulated by other ribosomal proteins, e.g. L4, L17, and L20. It is important during the early stages of 50S assembly. It makes multiple contacts with different domains of the 23S rRNA in the assembled 50S subunit and ribosome. The globular domain of the protein is located near the polypeptide exit tunnel on the outside of the subunit, while an extended beta-hairpin is found that lines the wall of the exit tunnel in the center of the 70S ribosome. The protein is Large ribosomal subunit protein uL22 of Mycobacterium leprae (strain TN).